A 238-amino-acid chain; its full sequence is Ribonuclease PH (238 aa).

Phosphate-binding positions include R86 and 124–126 (GTR).

It belongs to the RNase PH family. Homohexameric ring arranged as a trimer of dimers.

The enzyme catalyses tRNA(n+1) + phosphate = tRNA(n) + a ribonucleoside 5'-diphosphate. Its function is as follows. Phosphorolytic 3'-5' exoribonuclease that plays an important role in tRNA 3'-end maturation. Removes nucleotide residues following the 3'-CCA terminus of tRNAs; can also add nucleotides to the ends of RNA molecules by using nucleoside diphosphates as substrates, but this may not be physiologically important. Probably plays a role in initiation of 16S rRNA degradation (leading to ribosome degradation) during starvation. This Mesorhizobium japonicum (strain LMG 29417 / CECT 9101 / MAFF 303099) (Mesorhizobium loti (strain MAFF 303099)) protein is Ribonuclease PH.